Here is a 165-residue protein sequence, read N- to C-terminus: MSDPLTHFNDQNRAKMVDVTAKQVTARTATATGTIRMQPATLDRIHAGTMKKGDVLAVAQVAGIMAAKQTSNLIPMCHLIPLTGVDIHFTDNNQDTITATATVKTKHVTGVEIEALLAVQTTLLTIYDMCKAIDRGMVIDNVHLVEKDGGKSGHFQFGEAPESQA.

Substrate contacts are provided by residues 76–78 (MCH) and 113–114 (IE). Residue D128 is part of the active site.

Belongs to the MoaC family. In terms of assembly, homohexamer; trimer of dimers.

The catalysed reaction is (8S)-3',8-cyclo-7,8-dihydroguanosine 5'-triphosphate = cyclic pyranopterin phosphate + diphosphate. It participates in cofactor biosynthesis; molybdopterin biosynthesis. In terms of biological role, catalyzes the conversion of (8S)-3',8-cyclo-7,8-dihydroguanosine 5'-triphosphate to cyclic pyranopterin monophosphate (cPMP). This Limosilactobacillus fermentum (strain NBRC 3956 / LMG 18251) (Lactobacillus fermentum) protein is Cyclic pyranopterin monophosphate synthase.